Reading from the N-terminus, the 160-residue chain is Major pollen allergen Car b 1 isoforms 1A and 1B (160 aa).

It belongs to the BetVI family.

This is Major pollen allergen Car b 1 isoforms 1A and 1B from Carpinus betulus (European hornbeam).